The sequence spans 219 residues: Charged multivesicular body protein 5 (219 aa).

Residues 1 to 10 (MNRFFGKAKP) show a composition bias toward basic residues. The disordered stretch occupies residues 1 to 21 (MNRFFGKAKPKAPPPSLTDCI). The stretch at 26–179 (SRAESIDKKI…LGDELLADED (154 aa)) forms a coiled coil. Serine 86 is subject to Phosphoserine. A disordered region spans residues 188–219 (SAPAIPEGVPTDTKNKDGVLVDEFGLPQIPAS).

It belongs to the SNF7 family. Probable peripherally associated component of the endosomal sorting required for transport complex III (ESCRT-III). ESCRT-III components are thought to multimerize to form a flat lattice on the perimeter membrane of the endosome. Several assembly forms of ESCRT-III may exist that interact and act sequentially. Interacts with VTA1. Interacts with CHMP2A. Interacts with VTA1; the interaction involves soluble CHMP5. Interacts with NOD2. Interacts with BROX. In terms of processing, ISGylated. Isgylation inhibits its interaction with VTA1.

The protein resides in the cytoplasm. It localises to the cytosol. It is found in the endosome membrane. The protein localises to the midbody. Probable peripherally associated component of the endosomal sorting required for transport complex III (ESCRT-III) which is involved in multivesicular bodies (MVBs) formation and sorting of endosomal cargo proteins into MVBs. MVBs contain intraluminal vesicles (ILVs) that are generated by invagination and scission from the limiting membrane of the endosome and mostly are delivered to lysosomes enabling degradation of membrane proteins, such as stimulated growth factor receptors, lysosomal enzymes and lipids. The MVB pathway appears to require the sequential function of ESCRT-O, -I,-II and -III complexes. ESCRT-III proteins mostly dissociate from the invaginating membrane before the ILV is released. The ESCRT machinery also functions in topologically equivalent membrane fission events, such as the terminal stages of cytokinesis. ESCRT-III proteins are believed to mediate the necessary vesicle extrusion and/or membrane fission activities, possibly in conjunction with the AAA ATPase VPS4. This chain is Charged multivesicular body protein 5 (Chmp5), found in Mus musculus (Mouse).